Here is a 576-residue protein sequence, read N- to C-terminus: Boron transporter 1 (576 aa).

Residues 1-84 lie on the Cytoplasmic side of the membrane; it reads MSNESTRVTV…SDWVDAFNYR (84 aa). A disordered region spans residues 19–48; it reads ECAQALERTNDELDRESSVSESRSDEESHE. Positions 26–48 are enriched in basic and acidic residues; the sequence is RTNDELDRESSVSESRSDEESHE. Residues 85–105 traverse the membrane as a helical segment; it reads VIPSIVDTYFNNLLPAIAFAQ. Over 106–116 the chain is Extracellular; sequence DMFDRTDNSYG. A helical transmembrane segment spans residues 117-134; the sequence is VNEVLLSSAMAGIVFGVL. Over 135 to 140 the chain is Cytoplasmic; that stretch reads GGQPLC. The helical transmembrane segment at 141 to 160 threads the bilayer; the sequence is IVGVTGPISIFNYTVYEIIK. Over 161–165 the chain is Extracellular; the sequence is PLNTS. The helical transmembrane segment at 166–186 threads the bilayer; the sequence is YFGFMFWICMWSMIFHLVLAF. The Cytoplasmic portion of the chain corresponds to 187–192; sequence TNAVCL. A helical membrane pass occupies residues 193–213; sequence LQYVTTFPCDIFGLFINVVYI. The Extracellular portion of the chain corresponds to 214-235; that stretch reads QKGIQILTRQFSAKSGEKSVQD. The helical transmembrane segment at 236–256 threads the bilayer; it reads GFASVVVALVMTAFGLFFKLF. At 257–274 the chain is on the cytoplasmic side; the sequence is HYYPLFSHRIRTFISDYS. Residues 275-295 traverse the membrane as a helical segment; it reads TALSVLFWSSFTHFGGYLHDV. At 296–329 the chain is on the extracellular side; sequence KFKKLPITKAFFPTSKVNRPQNTWLAYEPIPVKD. The helical transmembrane segment at 330–350 threads the bilayer; the sequence is VFIALPFGIFLTILFYFDHNV. The Cytoplasmic segment spans residues 351–373; it reads SSLMAQRHQYKLKKPSSFHYDFA. The helical transmembrane segment at 374–394 threads the bilayer; that stretch reads LLGLTTCISGVLGIPAPNGLI. Topologically, residues 395–438 are extracellular; sequence PQAPLHTETLLVRDSNQKVISCVEQRFTNTFQGLMILGTMTRPL. Residues 439–459 form a helical membrane-spanning segment; sequence LVCLGEIPQAVLSGLFFIMGI. Residues 460-495 are Cytoplasmic-facing; that stretch reads NGLMTNSIIQRLVFLFSDPNRRDNTSPLMKVSKKSM. Residues 496–516 form a helical membrane-spanning segment; sequence LIFLSFSLTGFAGEFAITNTI. Topologically, residues 517–518 are extracellular; that stretch reads AA. Residues 519-539 traverse the membrane as a helical segment; the sequence is IGFPLVLLLSVLVSFSFAYIF. Over 540–576 the chain is Cytoplasmic; the sequence is PTEELKILDTNVAQKFTIKNLLLENIRDAKFCDKHED.

Belongs to the anion exchanger (TC 2.A.31) family.

The protein resides in the cell membrane. It is found in the vacuole membrane. In terms of biological role, functions in boric acid/borate export across the plasma membrane, and thereby protects yeast cells from boron toxicity. Involved in the trafficking of proteins to the vacuole. The chain is Boron transporter 1 (BOR1) from Saccharomyces cerevisiae (strain ATCC 204508 / S288c) (Baker's yeast).